A 233-amino-acid chain; its full sequence is Endonuclease V (233 aa).

Residues Asp-48 and Asp-116 each coordinate Mg(2+).

This sequence belongs to the endonuclease V family. Mg(2+) serves as cofactor.

It localises to the cytoplasm. The enzyme catalyses Endonucleolytic cleavage at apurinic or apyrimidinic sites to products with a 5'-phosphate.. DNA repair enzyme involved in the repair of deaminated bases. Selectively cleaves double-stranded DNA at the second phosphodiester bond 3' to a deoxyinosine leaving behind the intact lesion on the nicked DNA. The protein is Endonuclease V of Streptomyces coelicolor (strain ATCC BAA-471 / A3(2) / M145).